The sequence spans 119 residues: Large ribosomal subunit protein uL18 (119 aa).

It belongs to the universal ribosomal protein uL18 family. Part of the 50S ribosomal subunit; part of the 5S rRNA/L5/L18/L25 subcomplex. Contacts the 5S and 23S rRNAs.

Its function is as follows. This is one of the proteins that bind and probably mediate the attachment of the 5S RNA into the large ribosomal subunit, where it forms part of the central protuberance. This Clostridium botulinum (strain Alaska E43 / Type E3) protein is Large ribosomal subunit protein uL18.